We begin with the raw amino-acid sequence, 254 residues long: MSLNIRPFLAGNWKMNGTRESLGELRAIATGVSSNSGHLFEALICVPATLLSRAYDTLNGESLLLGGQNCHFDDYGPYTGDISAFMLKEAGASHVIIGHSERRTVYQENDAIVCAKVQAAWHAGLVALVCIGETLEERDNNKVMDVLAQQLEGSLPDDTTAENTIIAYEPVWAIGTGNTATSEDIAKVHYFIRDKICSRFGDEGNKIRLLYGGSVKPSSAFELLSIPHVNGALIGGASLKAIDFLTICDVCRKL.

12 to 14 (NWK) contacts substrate. His-99 functions as the Electrophile in the catalytic mechanism. The active-site Proton acceptor is Glu-169. Substrate contacts are provided by residues Gly-175, Ser-214, and 235–236 (GG).

Belongs to the triosephosphate isomerase family. As to quaternary structure, homodimer.

It localises to the cytoplasm. The enzyme catalyses D-glyceraldehyde 3-phosphate = dihydroxyacetone phosphate. It functions in the pathway carbohydrate biosynthesis; gluconeogenesis. It participates in carbohydrate degradation; glycolysis; D-glyceraldehyde 3-phosphate from glycerone phosphate: step 1/1. Involved in the gluconeogenesis. Catalyzes stereospecifically the conversion of dihydroxyacetone phosphate (DHAP) to D-glyceraldehyde-3-phosphate (G3P). This is Triosephosphate isomerase from Bartonella tribocorum (strain CIP 105476 / IBS 506).